We begin with the raw amino-acid sequence, 295 residues long: 4-diphosphocytidyl-2-C-methyl-D-erythritol kinase (295 aa).

The active site involves K18. Residue 101-111 participates in ATP binding; the sequence is PMGGGIGGGSS. Residue D143 is part of the active site.

This sequence belongs to the GHMP kinase family. IspE subfamily.

It catalyses the reaction 4-CDP-2-C-methyl-D-erythritol + ATP = 4-CDP-2-C-methyl-D-erythritol 2-phosphate + ADP + H(+). Its pathway is isoprenoid biosynthesis; isopentenyl diphosphate biosynthesis via DXP pathway; isopentenyl diphosphate from 1-deoxy-D-xylulose 5-phosphate: step 3/6. Functionally, catalyzes the phosphorylation of the position 2 hydroxy group of 4-diphosphocytidyl-2C-methyl-D-erythritol. The protein is 4-diphosphocytidyl-2-C-methyl-D-erythritol kinase of Vibrio cholerae serotype O1 (strain ATCC 39315 / El Tor Inaba N16961).